The chain runs to 223 residues: TMF-regulated nuclear protein 1 (223 aa).

2 disordered regions span residues 1–84 and 196–223; these read MPGC…GPAG and GRLR…SPQR. The segment covering 21-54 has biased composition (pro residues); sequence GSPPPPPREPLPSLQPPSPSPTSTPTPTKSPPLP. Residues 73-84 show a composition bias toward gly residues; it reads ASGGSGGAGPAG.

As to quaternary structure, interacts with TMF1; may regulate TRNP1 proteasomal degradation. In terms of processing, ubiquitinated, leading to its degradation by the proteasome. Expressed in brain and kidney (at protein level). Also detected in spleen and intestine.

The protein localises to the nucleus. In terms of biological role, DNA-binding factor that regulates the expression of a subset of genes and plays a key role in tangential, radial, and lateral expansion of the brain neocortex. Regulates neural stem cells proliferation and the production of intermediate neural progenitors and basal radial glial cells affecting the process of cerebral cortex gyrification. May control the proliferation rate of cells by regulating their progression through key cell-cycle transition points. The sequence is that of TMF-regulated nuclear protein 1 (Trnp1) from Mus musculus (Mouse).